The primary structure comprises 393 residues: Flavohemoprotein (393 aa).

The Globin domain occupies Met-1–Glu-139. Residue His-85 participates in heme b binding. Residues Tyr-95 and Glu-138 each act as charge relay system in the active site. The interval Gly-150–Ala-393 is reductase. The FAD-binding FR-type domain occupies Arg-153–Arg-256. FAD-binding positions include Tyr-191 and Arg-205 to Ser-208. NADP(+) is bound at residue Gly-268–Pro-273. Phe-384 to Pro-387 provides a ligand contact to FAD.

This sequence belongs to the globin family. Two-domain flavohemoproteins subfamily. The protein in the C-terminal section; belongs to the flavoprotein pyridine nucleotide cytochrome reductase family. Heme b is required as a cofactor. FAD serves as cofactor.

It carries out the reaction 2 nitric oxide + NADPH + 2 O2 = 2 nitrate + NADP(+) + H(+). It catalyses the reaction 2 nitric oxide + NADH + 2 O2 = 2 nitrate + NAD(+) + H(+). Is involved in NO detoxification in an aerobic process, termed nitric oxide dioxygenase (NOD) reaction that utilizes O(2) and NAD(P)H to convert NO to nitrate, which protects the bacterium from various noxious nitrogen compounds. Therefore, plays a central role in the inducible response to nitrosative stress. The sequence is that of Flavohemoprotein from Pseudomonas aeruginosa (strain ATCC 15692 / DSM 22644 / CIP 104116 / JCM 14847 / LMG 12228 / 1C / PRS 101 / PAO1).